The following is a 331-amino-acid chain: Fe-S cluster assembly protein DRE2 (331 aa).

The segment at 1 to 146 (MSEILLLLHP…MPTFKKPVSS (146 aa)) is N-terminal SAM-like domain. Residues 142–164 (KPVSSPVTLTDTSANNTDAEDDL) are disordered. Residues 146–158 (SPVTLTDTSANNT) are compositionally biased toward polar residues. The linker stretch occupies residues 147–202 (PVTLTDTSANNTDAEDDLSMKRKLDSTKLAYFSDDSSGEEDDLIDENELIADSHKF). Positions 212, 224, 227, and 229 each coordinate [2Fe-2S] cluster. The tract at residues 212–229 (CELPNGKKRKKACKDCTC) is fe-S binding site A. Positions 294, 297, 305, and 308 each coordinate [4Fe-4S] cluster. 2 consecutive short sequence motifs (cx2C motif) follow at residues 294 to 297 (CSSC) and 305 to 308 (CDGC). The interval 294 to 308 (CSSCALGDAFRCDGC) is fe-S binding site B.

The protein belongs to the anamorsin family. As to quaternary structure, monomer. Interacts with TAH18. Interacts with MIA40. The cofactor is [2Fe-2S] cluster. Requires [4Fe-4S] cluster as cofactor.

The protein resides in the cytoplasm. Its subcellular location is the mitochondrion intermembrane space. In terms of biological role, component of the cytosolic iron-sulfur (Fe-S) protein assembly (CIA) machinery required for the maturation of extramitochondrial Fe-S proteins. Part of an electron transfer chain functioning in an early step of cytosolic Fe-S biogenesis, facilitating the de novo assembly of a [4Fe-4S] cluster on the scaffold complex CFD1-NBP35. Electrons are transferred to DRE2 from NADPH via the FAD- and FMN-containing protein TAH18. TAH18-DRE2 are also required for the assembly of the diferric tyrosyl radical cofactor of ribonucleotide reductase (RNR), probably by providing electrons for reduction during radical cofactor maturation in the catalytic small subunit RNR2. The protein is Fe-S cluster assembly protein DRE2 of Clavispora lusitaniae (strain ATCC 42720) (Yeast).